A 185-amino-acid polypeptide reads, in one-letter code: Lysozyme g (185 aa).

The active site involves Glu-73.

The protein belongs to the glycosyl hydrolase 23 family.

It carries out the reaction Hydrolysis of (1-&gt;4)-beta-linkages between N-acetylmuramic acid and N-acetyl-D-glucosamine residues in a peptidoglycan and between N-acetyl-D-glucosamine residues in chitodextrins.. In Cyprinus carpio (Common carp), this protein is Lysozyme g.